The following is a 1221-amino-acid chain: Phosphoenolpyruvate carboxylase 2 (1221 aa).

Histidine 156 is a catalytic residue. 2 disordered regions span residues 443 to 588 (TAAE…DPTF) and 642 to 661 (REPAGEAHGGVGAGGGGGGG). Composition is skewed to low complexity over residues 503 to 513 (TTTATAAAAAA) and 550 to 564 (PFREAANAAMSTAAS). Composition is skewed to gly residues over residues 565 to 575 (GGAGGGGGGGA) and 648 to 661 (AHGGVGAGGGGGGG). Lysine 886 is an active-site residue.

This sequence belongs to the PEPCase type 1 family. Requires Mg(2+) as cofactor.

Its subcellular location is the cytoplasm. The enzyme catalyses oxaloacetate + phosphate = phosphoenolpyruvate + hydrogencarbonate. Functionally, through the carboxylation of phosphoenolpyruvate (PEP) it forms oxaloacetate, a four-carbon dicarboxylic acid source for the tricarboxylic acid cycle. The chain is Phosphoenolpyruvate carboxylase 2 from Chlamydomonas reinhardtii (Chlamydomonas smithii).